Here is a 235-residue protein sequence, read N- to C-terminus: Large ribosomal subunit protein uL1 (235 aa).

It belongs to the universal ribosomal protein uL1 family. As to quaternary structure, part of the 50S ribosomal subunit.

Functionally, binds directly to 23S rRNA. The L1 stalk is quite mobile in the ribosome, and is involved in E site tRNA release. In terms of biological role, protein L1 is also a translational repressor protein, it controls the translation of the L11 operon by binding to its mRNA. This chain is Large ribosomal subunit protein uL1, found in Methylobacterium sp. (strain 4-46).